The chain runs to 340 residues: UDP-3-O-acylglucosamine N-acyltransferase (340 aa).

The Proton acceptor role is filled by H238.

Belongs to the transferase hexapeptide repeat family. LpxD subfamily. Homotrimer.

It catalyses the reaction a UDP-3-O-[(3R)-3-hydroxyacyl]-alpha-D-glucosamine + a (3R)-hydroxyacyl-[ACP] = a UDP-2-N,3-O-bis[(3R)-3-hydroxyacyl]-alpha-D-glucosamine + holo-[ACP] + H(+). It participates in bacterial outer membrane biogenesis; LPS lipid A biosynthesis. Its function is as follows. Catalyzes the N-acylation of UDP-3-O-acylglucosamine using 3-hydroxyacyl-ACP as the acyl donor. Is involved in the biosynthesis of lipid A, a phosphorylated glycolipid that anchors the lipopolysaccharide to the outer membrane of the cell. The sequence is that of UDP-3-O-acylglucosamine N-acyltransferase from Shewanella frigidimarina (strain NCIMB 400).